The following is a 381-amino-acid chain: Sulfite reductase, dissimilatory-type subunit beta (381 aa).

[4Fe-4S] cluster-binding residues include cysteine 151, cysteine 188, cysteine 189, cysteine 193, cysteine 231, cysteine 258, cysteine 261, and cysteine 264. Siroheme is bound at residue cysteine 193. In terms of domain architecture, 4Fe-4S ferredoxin-type spans 249–276; sequence NTIAIKNERCMYCGNCYTMCPALPISDG.

Heterohexamer of two alpha, two beta and two gamma subunits. It depends on [4Fe-4S] cluster as a cofactor. The cofactor is siroheme.

The enzyme catalyses [DsrC protein]-trisulfide + NAD(+) + 3 H2O = [DsrC protein]-dithiol + sulfite + NADH + 3 H(+). Its function is as follows. Catalyzes the reduction of sulfite to sulfide. This is the terminal oxidation reaction in sulfate respiration, a process catalyzed by the sulfate-reducing bacteria. This chain is Sulfite reductase, dissimilatory-type subunit beta (dsvB), found in Nitratidesulfovibrio vulgaris (strain ATCC 29579 / DSM 644 / CCUG 34227 / NCIMB 8303 / VKM B-1760 / Hildenborough) (Desulfovibrio vulgaris).